The following is a 278-amino-acid chain: NH(3)-dependent NAD(+) synthetase (278 aa).

39–46 lines the ATP pocket; sequence GVSGGVDS. A Mg(2+)-binding site is contributed by aspartate 45. Arginine 121 lines the deamido-NAD(+) pocket. Threonine 141 contributes to the ATP binding site. A Mg(2+)-binding site is contributed by glutamate 146. Deamido-NAD(+) is bound by residues lysine 154 and aspartate 161. Residues lysine 170 and serine 192 each coordinate ATP. Residue 252 to 253 participates in deamido-NAD(+) binding; sequence HK.

It belongs to the NAD synthetase family. As to quaternary structure, homodimer.

It catalyses the reaction deamido-NAD(+) + NH4(+) + ATP = AMP + diphosphate + NAD(+) + H(+). It participates in cofactor biosynthesis; NAD(+) biosynthesis; NAD(+) from deamido-NAD(+) (ammonia route): step 1/1. Functionally, catalyzes the ATP-dependent amidation of deamido-NAD to form NAD. Uses ammonia as a nitrogen source. This chain is NH(3)-dependent NAD(+) synthetase, found in Saccharolobus solfataricus (strain ATCC 35092 / DSM 1617 / JCM 11322 / P2) (Sulfolobus solfataricus).